The sequence spans 352 residues: Secreted RxLR effector protein 122 (352 aa).

The first 21 residues, 1-21, serve as a signal peptide directing secretion; that stretch reads MRGAYYVLIALLVVASSQTSA. A RxLR-dEER motif is present at residues 48–65; the sequence is QFLRGSRNVPGDLAHEER. The segment covering 280 to 290 has biased composition (low complexity); it reads RGGTTGASRGT. The tract at residues 280-352 is disordered; it reads RGGTTGASRG…VEPEGHRSKP (73 aa). The segment covering 302 to 315 has biased composition (polar residues); sequence AASTSKGKSSVFTE.

This sequence belongs to the RxLR effector family.

It localises to the secreted. It is found in the host nucleus. Secreted effector that acts as an elicitor that induces cell death in host plant cells. The chain is Secreted RxLR effector protein 122 from Plasmopara viticola (Downy mildew of grapevine).